We begin with the raw amino-acid sequence, 89 residues long: DNA/RNA-binding protein Alba 2 (89 aa).

At Lys-12 the chain carries N6-acetyllysine. Residues Lys-14, Asp-18, and Asp-22 each coordinate Zn(2+).

This sequence belongs to the histone-like Alba family. Forms homodimers and homotetramers. Homodimer at pH below 6.0. Forms homotetramers and higher order homooligomers at near the growth temperature of 80 degrees Celsius and pH 7.0. Interacts with Alba 1; heterodimers lack cooperative DNA-binding behavior and result in more compact chromatin structures compared to Alba 1 homodimers. In terms of processing, acetylated. Acetylation at Lys-12 decreases DNA-binding affinity.

The protein resides in the cytoplasm. Its subcellular location is the chromosome. Functionally, binds single-stranded DNA, RNA and double-stranded DNA. Involved in DNA compaction. The polypeptide is DNA/RNA-binding protein Alba 2 (Saccharolobus solfataricus (strain ATCC 35092 / DSM 1617 / JCM 11322 / P2) (Sulfolobus solfataricus)).